Reading from the N-terminus, the 318-residue chain is MTSVIFLGTPEFAVPILEGLIAQHYDILAVMTQPDRKVGRKQRLAASPVKQAAQKHDIPVLQPEKLSGSPELAQAIAMAPDLIVTAAYGQFLPTKFLEAAKIIAVNVHGSLLPKYRGGAPIQYSIMNGDSETGVTIIEMVKKMDAGDMFAQAKLPLTRADDTGTVFAKLSLLGRDLLLETLPKIIAGTATRTPQDPDKVTFSPTITKEQEHLNIHLPAKALDQWIRALRPDVGGYVYLNGQRTKLWAITPLSAGSTLPAGSIVERDKHRLVMVAGQQTTFQVDELQPAGKAKQSIADFLNGPGQQLVSGQQVITDDPE.

Residue Ser-110–Pro-113 coordinates (6S)-5,6,7,8-tetrahydrofolate.

It belongs to the Fmt family.

It catalyses the reaction L-methionyl-tRNA(fMet) + (6R)-10-formyltetrahydrofolate = N-formyl-L-methionyl-tRNA(fMet) + (6S)-5,6,7,8-tetrahydrofolate + H(+). In terms of biological role, attaches a formyl group to the free amino group of methionyl-tRNA(fMet). The formyl group appears to play a dual role in the initiator identity of N-formylmethionyl-tRNA by promoting its recognition by IF2 and preventing the misappropriation of this tRNA by the elongation apparatus. The protein is Methionyl-tRNA formyltransferase of Lacticaseibacillus casei (strain BL23) (Lactobacillus casei).